The primary structure comprises 217 residues: ATP phosphoribosyltransferase (217 aa).

Belongs to the ATP phosphoribosyltransferase family. Short subfamily. In terms of assembly, heteromultimer composed of HisG and HisZ subunits.

The protein resides in the cytoplasm. The catalysed reaction is 1-(5-phospho-beta-D-ribosyl)-ATP + diphosphate = 5-phospho-alpha-D-ribose 1-diphosphate + ATP. Its pathway is amino-acid biosynthesis; L-histidine biosynthesis; L-histidine from 5-phospho-alpha-D-ribose 1-diphosphate: step 1/9. Its function is as follows. Catalyzes the condensation of ATP and 5-phosphoribose 1-diphosphate to form N'-(5'-phosphoribosyl)-ATP (PR-ATP). Has a crucial role in the pathway because the rate of histidine biosynthesis seems to be controlled primarily by regulation of HisG enzymatic activity. The sequence is that of ATP phosphoribosyltransferase from Synechococcus sp. (strain WH7803).